Here is a 145-residue protein sequence, read N- to C-terminus: Basic phospholipase A2 beta-bungarotoxin A-AL1 chain (145 aa).

The first 17 residues, 1 to 17, serve as a signal peptide directing secretion; the sequence is MLIFLWCGAVCVSLLGA. The propeptide occupies 18 to 25; that stretch reads ANIPPHPL. Intrachain disulfides connect Cys52/Cys144, Cys54/Cys70, Cys76/Cys118, Cys86/Cys111, and Cys104/Cys116. Ca(2+)-binding residues include Tyr53, Gly55, and Gly57. His73 is a catalytic residue. Residue Asp119 is part of the active site.

The protein belongs to the phospholipase A2 family. Group I subfamily. G49 sub-subfamily. Heterodimer; disulfide-linked. The A chains have phospholipase A2 activity and the B chains show homology with the basic protease inhibitors. Ca(2+) serves as cofactor. In terms of processing, this enzyme lacks one of the seven disulfide bonds found in similar PLA2 proteins. Expressed by the venom gland.

It is found in the secreted. The catalysed reaction is a 1,2-diacyl-sn-glycero-3-phosphocholine + H2O = a 1-acyl-sn-glycero-3-phosphocholine + a fatty acid + H(+). Its function is as follows. Snake venom phospholipase A2 (PLA2) that inhibits neuromuscular transmission by blocking acetylcholine release from the nerve termini. PLA2 catalyzes the calcium-dependent hydrolysis of the 2-acyl groups in 3-sn-phosphoglycerides. The polypeptide is Basic phospholipase A2 beta-bungarotoxin A-AL1 chain (Bungarus multicinctus (Many-banded krait)).